The following is a 431-amino-acid chain: Serine hydroxymethyltransferase 2 (431 aa).

(6S)-5,6,7,8-tetrahydrofolate is bound by residues Leu131 and 135–137 (GHL). N6-(pyridoxal phosphate)lysine is present on Lys240.

The protein belongs to the SHMT family. Homodimer. Requires pyridoxal 5'-phosphate as cofactor.

The protein localises to the cytoplasm. It catalyses the reaction (6R)-5,10-methylene-5,6,7,8-tetrahydrofolate + glycine + H2O = (6S)-5,6,7,8-tetrahydrofolate + L-serine. The protein operates within one-carbon metabolism; tetrahydrofolate interconversion. It functions in the pathway amino-acid biosynthesis; glycine biosynthesis; glycine from L-serine: step 1/1. Functionally, catalyzes the reversible interconversion of serine and glycine with tetrahydrofolate (THF) serving as the one-carbon carrier. This reaction serves as the major source of one-carbon groups required for the biosynthesis of purines, thymidylate, methionine, and other important biomolecules. Also exhibits THF-independent aldolase activity toward beta-hydroxyamino acids, producing glycine and aldehydes, via a retro-aldol mechanism. The sequence is that of Serine hydroxymethyltransferase 2 from Vibrio parahaemolyticus serotype O3:K6 (strain RIMD 2210633).